The sequence spans 461 residues: Secreted 45 kDa protein (461 aa).

The first 27 residues, 1 to 27 (MKKKIISAILMSTVILSAAAPLSGVYA), serve as a signal peptide directing secretion. Residues 264-329 (SSASASSSQA…GNTNSGTSTG (66 aa)) show a composition bias toward low complexity. The segment at 264 to 343 (SSASASSSQA…TTTGGSGINS (80 aa)) is disordered. Residues 330-340 (NTGGTTTGGSG) show a composition bias toward gly residues. Residues 330 to 459 (NTGGTTTGGS…VSASGVTFLM (130 aa)) form the Peptidase C51 domain.

The protein is Secreted 45 kDa protein (usp45) of Lactococcus lactis subsp. cremoris (strain MG1363).